Consider the following 296-residue polypeptide: Protein csh3 (296 aa).

The tract at residues 46 to 138 (ASPVTAPAAQ…PPSYPGPNTA (93 aa)) is disordered. A compositionally biased stretch (basic and acidic residues) spans 93-103 (GEKRTPEEPRK). Residues 111–124 (QKQSEASSVNSSTE) show a composition bias toward polar residues. An SH3 domain is found at 140–199 (KNVERVLAMYDFPGPDAGDLGFHAGEVIIVLEHVNNDWWRGELNGKEGIFPSNYVRLLED). Residues 202 to 246 (VKAQPPPPPPQQNYPPAASSSAPPMQYQQTAYPPQQAPYPPVQAY) are disordered. The span at 205–214 (QPPPPPPQQN) shows a compositional bias: pro residues. Residues 215-235 (YPPAASSSAPPMQYQQTAYPP) are compositionally biased toward low complexity.

In Schizosaccharomyces pombe (strain 972 / ATCC 24843) (Fission yeast), this protein is Protein csh3 (csh3).